The primary structure comprises 458 residues: ATP synthase subunit beta (458 aa).

Residue 148-155 participates in ATP binding; sequence GGAGVGKT.

The protein belongs to the ATPase alpha/beta chains family. In terms of assembly, F-type ATPases have 2 components, CF(1) - the catalytic core - and CF(0) - the membrane proton channel. CF(1) has five subunits: alpha(3), beta(3), gamma(1), delta(1), epsilon(1). CF(0) has three main subunits: a(1), b(2) and c(9-12). The alpha and beta chains form an alternating ring which encloses part of the gamma chain. CF(1) is attached to CF(0) by a central stalk formed by the gamma and epsilon chains, while a peripheral stalk is formed by the delta and b chains.

The protein localises to the cell inner membrane. It catalyses the reaction ATP + H2O + 4 H(+)(in) = ADP + phosphate + 5 H(+)(out). In terms of biological role, produces ATP from ADP in the presence of a proton gradient across the membrane. The catalytic sites are hosted primarily by the beta subunits. The polypeptide is ATP synthase subunit beta (Pseudomonas putida (strain GB-1)).